The primary structure comprises 955 residues: 2-oxoglutarate dehydrogenase E1 component (955 aa).

Belongs to the alpha-ketoglutarate dehydrogenase family. As to quaternary structure, homodimer. Part of the 2-oxoglutarate dehydrogenase (OGDH) complex composed of E1 (2-oxoglutarate dehydrogenase), E2 (dihydrolipoamide succinyltransferase) and E3 (dihydrolipoamide dehydrogenase); the complex contains multiple copies of the three enzymatic components (E1, E2 and E3). It depends on thiamine diphosphate as a cofactor.

It carries out the reaction N(6)-[(R)-lipoyl]-L-lysyl-[protein] + 2-oxoglutarate + H(+) = N(6)-[(R)-S(8)-succinyldihydrolipoyl]-L-lysyl-[protein] + CO2. Functionally, E1 component of the 2-oxoglutarate dehydrogenase (OGDH) complex which catalyzes the decarboxylation of 2-oxoglutarate, the first step in the conversion of 2-oxoglutarate to succinyl-CoA and CO(2). The chain is 2-oxoglutarate dehydrogenase E1 component from Bacillus cereus (strain ZK / E33L).